The chain runs to 1506 residues: Transient receptor potential cation channel subfamily M member 2 (1506 aa).

The segment covering 1-11 (MESLDRRRTGS) has biased composition (basic and acidic residues). The interval 1–22 (MESLDRRRTGSEQEEGFGVQSR) is disordered. At 1 to 750 (MESLDRRRTG…WWGQLCVDNG (750 aa)) the chain is on the cytoplasmic side. 5 residues coordinate ADP-D-ribose: threonine 173, asparagine 178, arginine 301, glycine 332, and threonine 335. A Phosphothreonine modification is found at threonine 738. Residues 751 to 767 (LWRIILCMLAFPLLFTG) lie within the membrane without spanning it. The Cytoplasmic segment spans residues 768-792 (FISFREKRLQALCRPARVRAFFNAP). The helical transmembrane segment at 793–813 (VVIFHMNILSYFAFLCLFAYV) threads the bilayer. The Extracellular portion of the chain corresponds to 814–824 (LMVDFQPSPSW). The chain crosses the membrane as a helical span at residues 825-845 (CEYLIYLWLFSLVCEETRQLF). Ca(2+)-binding residues include glutamate 840 and glutamine 843. Topologically, residues 846–864 (YDPDGCGLMKMASLYFSDF) are cytoplasmic. Residues 865–885 (WNKLDVGAILLFIVGLTCRLI) form a helical membrane-spanning segment. Asparagine 866 is a Ca(2+) binding site. The Extracellular segment spans residues 886–893 (PATLYPGR). A helical transmembrane segment spans residues 894–914 (IILSLDFIMFCLRLMHIFTIS). Residues 915–926 (KTLGPKIIIVKR) lie on the Cytoplasmic side of the membrane. A helical transmembrane segment spans residues 927-947 (MMKDVFFFLFLLAVWVVSFGV). Topologically, residues 948-967 (AKQAILIHNESRVDWIFRGV) are extracellular. The pore-forming intramembrane region spans 968–982 (VYHSYLTIFGQIPTY). The Selectivity filter signature appears at 976-979 (FGQI). At 983 to 1019 (IDGVNFSMDQCSPNGTDPYKPKCPESDWTGQAPAFPE) the chain is on the extracellular side. The cysteines at positions 993 and 1005 are disulfide-linked. Residues 1020-1041 (WLTVTLLCLYLLFANILLLNLL) form a helical membrane-spanning segment. The Cytoplasmic portion of the chain corresponds to 1042 to 1076 (IAMFNYTFQEVQEHTDQIWKFQRHDLIEEYHGRPP). Position 1070 (glutamate 1070) interacts with Ca(2+). Residues 1077–1095 (APPPLILLSHLQLLIKRIV) lie within the membrane without spanning it. The Cytoplasmic portion of the chain corresponds to 1096–1506 (LKIPAKRHKQ…KVASLFGAHF (411 aa)). One can recognise a Nudix hydrolase domain in the interval 1350–1501 (RWKRNQGGAI…KTILQKVASL (152 aa)). An ADP-D-ribose-binding site is contributed by serine 1378. A Nudix box motif is present at residues 1386-1407 (GSREPGEMLPRKLKRVLRQEFW). The ADP-D-ribose site is built by aspartate 1427, arginine 1429, tyrosine 1488, and asparagine 1490.

The protein belongs to the transient receptor (TC 1.A.4) family. LTrpC subfamily. TRPM2 sub-subfamily. Homotetramer. Post-translationally, protein kinase C (PKC)-mediated phosphorylation of TRPM2 at Thr-738 counteracts the effect of cytosolic Ca(2+) and elevates the temperature threshold. In terms of tissue distribution, detected in the preoptic area of the hypothalamus, a brain area involved in body temperature control. Detected in beta-cells in pancreas islets (at protein level). Detected in brain cortex, striatum, hippocampus CA1, CA2 and CA3 layers, and in the Purkinje cell layer in cerebellum. Widely expressed, with highest levels in lung, spleen, eye and brain. Detected in dendritic cells and in polymorphonuclear neutrophils.

It localises to the cell membrane. It is found in the perikaryon. The protein localises to the cell projection. Its subcellular location is the cytoplasmic vesicle. The protein resides in the lysosome. It catalyses the reaction Ca(2+)(in) = Ca(2+)(out). It carries out the reaction Na(+)(in) = Na(+)(out). Its activity is regulated as follows. Activated by intracellular ADP-ribose, beta-NAD (NAD(+)) and similar compounds, and by oxidative stress caused by reactive oxygen or nitrogen species. Ca(2+) and PI(4,5)P2 are required for channel opening by ADP-ribose. Activated by moderate heat (35 to 40 degrees Celsius). Activation by ADP-ribose and beta-NAD is strongly increased by moderate heat (35 to 40 degrees Celsius). Likewise, reactive oxygen species lower the threshold for activation by moderate heat (37 degrees Celsius). Inactivated by exposure to extracellular pH between 4.0 and 6.5; irreversibly inactivated when open channels are exposed to extracellular pH between 4.0 and 6.5, while pre-exposure of closed channels to extracellular pH 5.5 gives rise to currents that rapidly inactivate, but protects against irreversible inactivation. Inactivated by intracellular ATP. Activated by arachidonic acid. Inhibited by 2-aminoethyl diphenylborinate (2-APB). Functionally, nonselective, voltage-independent cation channel that mediates Na(+) and Ca(2+) influx, leading to increased cytoplasmic Ca(2+) levels. Functions as a ligand-gated ion channel, gated by intracellular adenosine diphosphate ribose (ADP-ribose), Ca(2+), warm temperature, and oxidative stress. The precise physiological activators are under debate; the true, physiological activators may be ADP-ribose and ADP-ribose-2'-phosphate. Binding of ADP-ribose to the cytoplasmic Nudix domain causes a conformation change; the channel is primed but still requires Ca(2+) binding to trigger channel opening. Extracellular Ca(2+) passes through the channel and increases channel activity. Also contributes to Ca(2+) release from intracellular stores in response to ADP-ribose. Plays a role in numerous processes that involve signaling via intracellular Ca(2+) levels. Besides, mediates the release of lysosomal Zn(2+) stores in response to reactive oxygen species, leading to increased cytosolic Zn(2+) levels. Plays a role in mediating behavorial and physiological responses to moderate heat and thereby contributes to body temperature homeostasis. Plays a role in insulin secretion, a process that requires increased cytoplasmic Ca(2+) levels. Required for normal IFNG and cytokine secretion and normal innate immune immunity in response to bacterial infection. Required for normal phagocytosis and cytokine release by macrophages exposed to zymosan (in vitro). Plays a role in dendritic cell differentiation and maturation, and in dendritic cell chemotaxis via its role in regulating cytoplasmic Ca(2+) levels. Plays a role in the regulation of the reorganization of the actin cytoskeleton and filopodia formation in response to reactive oxygen species via its function in increasing cytoplasmic Ca(2+) and Zn(2+) levels. Confers susceptibility to cell death following oxidative stress. The sequence is that of Transient receptor potential cation channel subfamily M member 2 (Trpm2) from Mus musculus (Mouse).